Reading from the N-terminus, the 307-residue chain is Ribosomal RNA small subunit methyltransferase H (307 aa).

S-adenosyl-L-methionine-binding positions include 32–34 (GGH), D52, F78, D99, and Q106.

This sequence belongs to the methyltransferase superfamily. RsmH family.

Its subcellular location is the cytoplasm. It carries out the reaction cytidine(1402) in 16S rRNA + S-adenosyl-L-methionine = N(4)-methylcytidine(1402) in 16S rRNA + S-adenosyl-L-homocysteine + H(+). Its function is as follows. Specifically methylates the N4 position of cytidine in position 1402 (C1402) of 16S rRNA. This chain is Ribosomal RNA small subunit methyltransferase H, found in Caldicellulosiruptor saccharolyticus (strain ATCC 43494 / DSM 8903 / Tp8T 6331).